Reading from the N-terminus, the 483-residue chain is Chromatin structure-remodeling complex protein RSC6 (483 aa).

Disordered regions lie at residues 142 to 183 and 273 to 309; these read KRKR…EAES and AQDG…DKPE. A compositionally biased stretch (low complexity) spans 148 to 158; sequence SLSLPLNLQQP. The span at 171–180 shows a compositional bias: acidic residues; sequence DNGEDEDSAE.

The protein to yeast SNF12. As to quaternary structure, interacts directly with RSC8. Component of the two forms of the RSC complex composed of at least either RSC1 or RSC2, and ARP7, ARP9, LDB7, NPL6, RSC3, RSC30, RSC4, RSC58, RSC6, RSC8, RSC9, SFH1, STH1, HTL1 and probably RTT102. The complexes interact with histone and histone variant components of centromeric chromatin.

It is found in the nucleus. Functionally, component of the chromatin structure-remodeling complex (RSC), which is involved in transcription regulation and nucleosome positioning. RSC is responsible for the transfer of a histone octamer from a nucleosome core particle to naked DNA. The reaction requires ATP and involves an activated RSC-nucleosome intermediate. Remodeling reaction also involves DNA translocation, DNA twist and conformational change. As a reconfigurer of centromeric and flanking nucleosomes, RSC complex is required both for proper kinetochore function in chromosome segregation and, via a PKC1-dependent signaling pathway, for organization of the cellular cytoskeleton. This subunit is essential for mitotic growth and suppresses formamide sensitivity of the RSC8 mutants. In Saccharomyces cerevisiae (strain ATCC 204508 / S288c) (Baker's yeast), this protein is Chromatin structure-remodeling complex protein RSC6 (RSC6).